The sequence spans 301 residues: MSNLNKRPDWIKVKAPNSAEYYNTKDLIKNLRLNTVCEEAACPNIGECWSKKHATVMILGSVCTRACRFCNVKTGRPDLLDPHEPQRLAEAVQKLNLKHVVITSVDRDDLDDGGATHFAECISEIRKSSPNTTIEILTPDFLRKEGAAEIIANAKPDVFNHNVETVPSLYKTIRPGARYYNSLSLLHNIKKLSPEIFTKSGMMVGLGEEISEVIQVMDDLREAKVDFLTIGQYLQPTKNHAEVAKYVTPEEFKYLERIARTKGFLMVSATPLTRSSYHADEDFQKLKENYQQRHCEEAWPA.

[4Fe-4S] cluster is bound by residues cysteine 37, cysteine 42, cysteine 48, cysteine 63, cysteine 67, cysteine 70, and serine 276. One can recognise a Radical SAM core domain in the interval 49–265 (WSKKHATVMI…ERIARTKGFL (217 aa)).

Belongs to the radical SAM superfamily. Lipoyl synthase family. Requires [4Fe-4S] cluster as cofactor.

The protein resides in the cytoplasm. It catalyses the reaction [[Fe-S] cluster scaffold protein carrying a second [4Fe-4S](2+) cluster] + N(6)-octanoyl-L-lysyl-[protein] + 2 oxidized [2Fe-2S]-[ferredoxin] + 2 S-adenosyl-L-methionine + 4 H(+) = [[Fe-S] cluster scaffold protein] + N(6)-[(R)-dihydrolipoyl]-L-lysyl-[protein] + 4 Fe(3+) + 2 hydrogen sulfide + 2 5'-deoxyadenosine + 2 L-methionine + 2 reduced [2Fe-2S]-[ferredoxin]. It participates in protein modification; protein lipoylation via endogenous pathway; protein N(6)-(lipoyl)lysine from octanoyl-[acyl-carrier-protein]: step 2/2. In terms of biological role, catalyzes the radical-mediated insertion of two sulfur atoms into the C-6 and C-8 positions of the octanoyl moiety bound to the lipoyl domains of lipoate-dependent enzymes, thereby converting the octanoylated domains into lipoylated derivatives. The chain is Lipoyl synthase from Rickettsia felis (strain ATCC VR-1525 / URRWXCal2) (Rickettsia azadi).